The primary structure comprises 431 residues: Serine/threonine-protein kinase Sgk1 (431 aa).

A necessary for localization to the mitochondria region spans residues 1–60; sequence MTVKTEAAKGTLTYSRMRGMVAILIAFMKQRRMGLNDFIQKIANNSYACKHPEVQSILKI. Positions 66–92 are disordered; that stretch reads PELMNANPSPPPSPSQQINLGPSSNPH. S74 is subject to Phosphoserine. A Phosphoserine; by MAPK7 modification is found at S78. The span at 81 to 91 shows a compositional bias: polar residues; that stretch reads QQINLGPSSNP. The 258-residue stretch at 98–355 folds into the Protein kinase domain; that stretch reads FHFLKVIGKG…FMEIKSHVFF (258 aa). Residues 104–112 and K127 each bind ATP; that span reads IGKGSFGKV. The Nuclear localization signal signature appears at 131–141; sequence KKAILKKKEEK. D222 functions as the Proton acceptor in the catalytic mechanism. T256 carries the post-translational modification Phosphothreonine; by PDPK1. Residues 356-431 enclose the AGC-kinase C-terminal domain; sequence SLINWDDLIN…SYAPPTDSFL (76 aa). T369 is modified (phosphothreonine; by PKA). Residues S397, S401, and S422 each carry the phosphoserine modification.

This sequence belongs to the protein kinase superfamily. AGC Ser/Thr protein kinase family. In terms of assembly, homodimer; disulfide-linked. Forms a trimeric complex with FBXW7 and NOTCH1. Interacts with MAPK3/ERK1, MAPK1/ERK2, MAP2K1/MEK1, MAP2K2/MEK2, NEDD4, NEDD4L, MAPT/TAU, MAPK7, CREB1, SLC9A3R2/NHERF2 and KCNJ1/ROMK1. Associates with the mammalian target of rapamycin complex 2 (mTORC2) via an interaction with MAPKAP1/SIN1. Regulated by phosphorylation. Activated by phosphorylation on Ser-422 by mTORC2, transforming it into a substrate for PDPK1 which phosphorylates it on Thr-256. Phosphorylation on Ser-397 and Ser-401 are also essential for its activity. Phosphorylation on Ser-78 by MAPK7 is required for growth factor-induced cell cycle progression. Post-translationally, ubiquitinated by NEDD4L; which promotes proteasomal degradation. Ubiquitinated by SYVN1 at the endoplasmic reticulum; which promotes rapid proteasomal degradation and maintains a high turnover rate in resting cells. Isoform 2 shows enhanced stability. In terms of tissue distribution, expressed in most tissues with highest levels in the pancreas, followed by placenta, kidney and lung. Isoform 2 is strongly expressed in brain and pancreas, weaker in heart, placenta, lung, liver and skeletal muscle.

It is found in the cytoplasm. It localises to the nucleus. The protein localises to the endoplasmic reticulum membrane. Its subcellular location is the cell membrane. The protein resides in the mitochondrion. It catalyses the reaction L-seryl-[protein] + ATP = O-phospho-L-seryl-[protein] + ADP + H(+). It carries out the reaction L-threonyl-[protein] + ATP = O-phospho-L-threonyl-[protein] + ADP + H(+). Its activity is regulated as follows. Two specific sites, one in the kinase domain (Thr-256) and the other in the C-terminal regulatory region (Ser-422), need to be phosphorylated for its full activation. Phosphorylation at Ser-397 and Ser-401 are also essential for its activity. Activated by WNK1, WNK2, WNK3 and WNK4; which promote phosphorylation by mTORC2. Serine/threonine-protein kinase which is involved in the regulation of a wide variety of ion channels, membrane transporters, cellular enzymes, transcription factors, neuronal excitability, cell growth, proliferation, survival, migration and apoptosis. Plays an important role in cellular stress response. Contributes to regulation of renal Na(+) retention, renal K(+) elimination, salt appetite, gastric acid secretion, intestinal Na(+)/H(+) exchange and nutrient transport, insulin-dependent salt sensitivity of blood pressure, salt sensitivity of peripheral glucose uptake, cardiac repolarization and memory consolidation. Up-regulates Na(+) channels: SCNN1A/ENAC, SCN5A and ASIC1/ACCN2, K(+) channels: KCNJ1/ROMK1, KCNA1-5, KCNQ1-5 and KCNE1, epithelial Ca(2+) channels: TRPV5 and TRPV6, chloride channels: BSND, CLCN2 and CFTR, glutamate transporters: SLC1A3/EAAT1, SLC1A2 /EAAT2, SLC1A1/EAAT3, SLC1A6/EAAT4 and SLC1A7/EAAT5, amino acid transporters: SLC1A5/ASCT2, SLC38A1/SN1 and SLC6A19, creatine transporter: SLC6A8, Na(+)/dicarboxylate cotransporter: SLC13A2/NADC1, Na(+)-dependent phosphate cotransporter: SLC34A2/NAPI-2B, glutamate receptor: GRIK2/GLUR6. Up-regulates carriers: SLC9A3/NHE3, SLC12A1/NKCC2, SLC12A3/NCC, SLC5A3/SMIT, SLC2A1/GLUT1, SLC5A1/SGLT1 and SLC15A2/PEPT2. Regulates enzymes: GSK3A/B, PMM2 and Na(+)/K(+) ATPase, and transcription factors: CTNNB1 and nuclear factor NF-kappa-B. Stimulates sodium transport into epithelial cells by enhancing the stability and expression of SCNN1A/ENAC. This is achieved by phosphorylating the NEDD4L ubiquitin E3 ligase, promoting its interaction with 14-3-3 proteins, thereby preventing it from binding to SCNN1A/ENAC and targeting it for degradation. Regulates store-operated Ca(+2) entry (SOCE) by stimulating ORAI1 and STIM1. Regulates KCNJ1/ROMK1 directly via its phosphorylation or indirectly via increased interaction with SLC9A3R2/NHERF2. Phosphorylates MDM2 and activates MDM2-dependent ubiquitination of p53/TP53. Phosphorylates MAPT/TAU and mediates microtubule depolymerization and neurite formation in hippocampal neurons. Phosphorylates SLC2A4/GLUT4 and up-regulates its activity. Phosphorylates APBB1/FE65 and promotes its localization to the nucleus. Phosphorylates MAPK1/ERK2 and activates it by enhancing its interaction with MAP2K1/MEK1 and MAP2K2/MEK2. Phosphorylates FBXW7 and plays an inhibitory role in the NOTCH1 signaling. Phosphorylates FOXO1 resulting in its relocalization from the nucleus to the cytoplasm. Phosphorylates FOXO3, promoting its exit from the nucleus and interference with FOXO3-dependent transcription. Phosphorylates BRAF and MAP3K3/MEKK3 and inhibits their activity. Phosphorylates SLC9A3/NHE3 in response to dexamethasone, resulting in its activation and increased localization at the cell membrane. Phosphorylates CREB1. Necessary for vascular remodeling during angiogenesis. Sustained high levels and activity may contribute to conditions such as hypertension and diabetic nephropathy. Isoform 2 exhibited a greater effect on cell plasma membrane expression of SCNN1A/ENAC and Na(+) transport than isoform 1. This Homo sapiens (Human) protein is Serine/threonine-protein kinase Sgk1 (SGK1).